A 505-amino-acid chain; its full sequence is Deoxyguanosinetriphosphate triphosphohydrolase (505 aa).

Residues 66–273 form the HD domain; sequence RLTHSMEVQQ…MEAADDISYC (208 aa).

This sequence belongs to the dGTPase family. Type 1 subfamily. In terms of assembly, homotetramer. The cofactor is Mg(2+).

The catalysed reaction is dGTP + H2O = 2'-deoxyguanosine + triphosphate + H(+). Functionally, dGTPase preferentially hydrolyzes dGTP over the other canonical NTPs. This chain is Deoxyguanosinetriphosphate triphosphohydrolase, found in Shigella flexneri.